The sequence spans 106 residues: PAT complex subunit Asterix (106 aa).

Over residues 1–10 (MSANSMSDPR) the composition is skewed to polar residues. Positions 1-29 (MSANSMSDPRSPNKVLRYKPPPSECNPAL) are disordered. Serine 2 bears the N-acetylserine mark. At 2–32 (SANSMSDPRSPNKVLRYKPPPSECNPALDDP) the chain is on the cytoplasmic side. A helical transmembrane segment spans residues 33-51 (TPDYMNLLGMIFSMCGLML). Lysine 52 is a topological domain (lumenal). The helical transmembrane segment at 53 to 70 (LKWCAWVAVYCSFISFAN) threads the bilayer. The Cytoplasmic portion of the chain corresponds to 71–74 (SRSS). Residues 75–95 (EDTKQMMSSFMLSISAVVMSY) form a helical membrane-spanning segment. Topologically, residues 96 to 106 (LQNPQPMTPPW) are lumenal.

Belongs to the Asterix family. Component of the PAT complex, composed of WDR83OS/Asterix and CCDC47. The PAT complex is part of the multi-pass translocon (MPT) complex, composed of three subcomplexes, the GEL complex (composed of RAB5IF/OPTI and TMCO1), the BOS complex (composed of NCLN/Nicalin, NOMO1 and TMEM147) and the PAT complex (composed of WDR83OS/Asterix and CCDC47). The MPT complex associates with the SEC61 complex.

The protein localises to the endoplasmic reticulum membrane. Component of the multi-pass translocon (MPT) complex that mediates insertion of multi-pass membrane proteins into the lipid bilayer of membranes. The MPT complex takes over after the SEC61 complex: following membrane insertion of the first few transmembrane segments of proteins by the SEC61 complex, the MPT complex occludes the lateral gate of the SEC61 complex to promote insertion of subsequent transmembrane regions. Within the MPT complex, the PAT subcomplex sequesters any highly polar regions in the transmembrane domains away from the non-polar membrane environment until they can be buried in the interior of the fully assembled protein. Within the PAT subcomplex, WDR83OS/Asterix binds to and redirects the substrate to a location behind the SEC61 complex. This Sus scrofa (Pig) protein is PAT complex subunit Asterix (WDR83OS).